A 241-amino-acid polypeptide reads, in one-letter code: Triosephosphate isomerase (241 aa).

9-11 (NWK) is a substrate binding site. Catalysis depends on histidine 96, which acts as the Electrophile. Catalysis depends on glutamate 165, which acts as the Proton acceptor. Residues glycine 171, serine 204, and 225–226 (GG) contribute to the substrate site.

Belongs to the triosephosphate isomerase family. In terms of assembly, homodimer.

The protein resides in the cytoplasm. The catalysed reaction is D-glyceraldehyde 3-phosphate = dihydroxyacetone phosphate. It participates in carbohydrate biosynthesis; gluconeogenesis. Its pathway is carbohydrate degradation; glycolysis; D-glyceraldehyde 3-phosphate from glycerone phosphate: step 1/1. Functionally, involved in the gluconeogenesis. Catalyzes stereospecifically the conversion of dihydroxyacetone phosphate (DHAP) to D-glyceraldehyde-3-phosphate (G3P). The sequence is that of Triosephosphate isomerase from Prochlorococcus marinus (strain MIT 9301).